The primary structure comprises 150 residues: Monooxygenase nsrS (150 aa).

It belongs to the avfA family.

It functions in the pathway secondary metabolite biosynthesis. In terms of biological role, monooxygenase; part of the gene cluster that mediates the biosynthesis of the tetrahydroxanthone dimer neosartorin, which exhibits antibacterial activity. The two different monomeric units appear to be synthesized by the same set of enzymes, among which the Baeyer-Villiger monooxygenase nsrF is the key enzyme for the divergence of the biosynthetic routes. The pathway begins with the synthesis of atrochrysone thioester by the polyketide synthase nsrB. The atrochrysone carboxyl ACP thioesterase nsrC then breaks the thioester bond and releases the atrochrysone carboxylic acid from AacuL. Atrochrysone carboxylic acid is decarboxylated by the decarboxylase nsrE, and oxidized by the anthrone oxygenase nsrD to yield emodin. Emodin is then reduced to emodin hydroquinone by the oxidoreductase nsrR. A-ring reduction by the short chain dehydrogenase nsrJ, dehydration by the scytalone dehydratase-like protein nsrI and probable spontaneous re-oxidation, results in overall deoxygenation to chrysophanol. The Baeyer-Villiger monooxygenase nsrF accepts chrysophanol as a substrate to insert one oxygen atom at two different positions to yield the precursors of both monomric units. NsrF is promiscuous/flexible in interacting with the 2 (non methylated and methylated) aromatic rings of chrysophanol, thus diverging the biosynthetic pathway at this point. After the hydrolysis of the lactones, methylesterification by the methyltransferase nsrG yields respectively moniliphenone and 2,2',6'-trihydroxy-4-methyl-6-methoxya-cyldiphenylmethanone. The next steps are the hydroxylation by the FAD-dependent monooxygenase nsrK, followed by isomerization by the monooxygenase nsrQ. The short chain dehydrogenase/reductase nsrO then catalyzes the C-5 ketoreduction to give the xanthone skeleton of blennolide C and 5-acetylblennolide A. The acetyltransferase nsrL has a strict substrate specificity and uses only blennolide A but not blennolide C to yield 5-acetylblennolide A as the single-acetylated product. In the final step of the biosynthesis, the heterodimerization of the 2 xanthones, blennolide C and 5-acetylblennolide A, is catalyzed by the cytochrome P450 monooxygenase nsrP. NsrP can utilize at least three different xanthones as its substrates to perform the dimerization reaction. The protein is Monooxygenase nsrS of Aspergillus novofumigatus (strain IBT 16806).